The sequence spans 289 residues: Rhodopsin (289 aa).

Topologically, residues 1 to 7 are extracellular; the sequence is YLVNPAA. The chain crosses the membrane as a helical span at residues 8 to 32; it reads YAALGAYMFLLILIGFPINFLTLYV. Topologically, residues 33 to 44 are cytoplasmic; sequence TLEHKKLRTPLN. Residues 45 to 67 traverse the membrane as a helical segment; sequence YILLNLAVGNLFMVLGGFTTTMY. Residues 68–81 lie on the Extracellular side of the membrane; sequence TSMHGYFVLGRLGC. A disulfide bond links Cys81 and Cys158. Residues 82–104 form a helical membrane-spanning segment; it reads NLEGFFATLGGEIALWSLVVLAI. The short motif at 105 to 107 is the 'Ionic lock' involved in activated form stabilization element; that stretch reads ERW. Topologically, residues 105 to 123 are cytoplasmic; it reads ERWIVVCKPISKFRFTEDH. A helical membrane pass occupies residues 124–144; that stretch reads AIMGLAFSWVMGLACAVPPLV. The Extracellular portion of the chain corresponds to 145–173; sequence GWSRYIPEGMKCSCGVDYYTRAEGFNNES. N-linked (GlcNAc...) asparagine glycosylation occurs at Asn171. Residues 174-195 form a helical membrane-spanning segment; sequence FVIYMFIVHFLIPLSVIFFCYG. Residues 196 to 223 lie on the Cytoplasmic side of the membrane; the sequence is RLLCAVKEAAAAQQESETTQRAEKEVSR. A helical transmembrane segment spans residues 224 to 245; that stretch reads MVVIMVIGFLVCWLPYASVAWW. The Extracellular segment spans residues 246–257; sequence IFCNQGSDFGPI. A helical membrane pass occupies residues 258-279; that stretch reads FMTLPSFFAKRPAIYNPMIYIC. The residue at position 267 (Lys267) is an N6-(retinylidene)lysine. The Cytoplasmic segment spans residues 280 to 289; the sequence is MNKQFRHCMI.

The protein belongs to the G-protein coupled receptor 1 family. Opsin subfamily. In terms of processing, phosphorylated on some or all of the serine and threonine residues present in the C-terminal region. Post-translationally, contains one covalently linked retinal chromophore.

The protein localises to the membrane. The protein resides in the cell projection. It is found in the cilium. Its subcellular location is the photoreceptor outer segment. Its function is as follows. Photoreceptor required for image-forming vision at low light intensity. While most salt water fish species use retinal as chromophore, most freshwater fish use 3-dehydroretinal, or a mixture of retinal and 3-dehydroretinal. Light-induced isomerization of 11-cis to all-trans retinal triggers a conformational change that activates signaling via G-proteins. Subsequent receptor phosphorylation mediates displacement of the bound G-protein alpha subunit by arrestin and terminates signaling. In Cottinella boulengeri (Short-headed sculpin), this protein is Rhodopsin (rho).